The following is a 1113-amino-acid chain: Myosin-binding protein 1 (1113 aa).

Residues 12–34 (LAFNEWLLMFMLFVNSIFSYVIA) traverse the membrane as a helical segment. Residues 209–229 (ESEAVFSDTEPKQESSLNHLP) are disordered. Residues 888–986 (SEGDRLKRQV…DLEAEIEYFR (99 aa)) enclose the GTD-binding domain.

As to quaternary structure, interacts with myosin XI-K, XI-I and XI-1. In terms of tissue distribution, expressed in leaf epidermal cells, roots and root hairs.

It is found in the endomembrane system. Membrane-anchored myosin receptors that define a distinct, plant-specific transport vesicle compartment. The protein is Myosin-binding protein 1 of Arabidopsis thaliana (Mouse-ear cress).